The following is a 488-amino-acid chain: 1-deoxy-D-xylulose 5-phosphate reductoisomerase, apicoplastic (488 aa).

Residues 1–72 constitute an apicoplast transit peptide; sequence MKKYIYIYFF…LCKKDLIDIG (72 aa). NADP(+) is bound by residues 86–89 and 115–117; these read TGSI and NKS. Lys205 serves as a coordination point for 1-deoxy-D-xylulose 5-phosphate. Glu206 contributes to the NADP(+) binding site. Position 231 (Asp231) interacts with Mn(2+). 1-deoxy-D-xylulose 5-phosphate contacts are provided by Ser232, Glu233, Ser270, and His293. Glu233 contacts Mn(2+). Gly299 lines the NADP(+) pocket. 1-deoxy-D-xylulose 5-phosphate-binding residues include Ser306, Asn311, Lys312, and Glu315. Glu315 lines the Mn(2+) pocket.

This sequence belongs to the DXR family. As to quaternary structure, homodimer. Mg(2+) serves as cofactor. Mn(2+) is required as a cofactor.

It is found in the plastid. Its subcellular location is the apicoplast. The catalysed reaction is 2-C-methyl-D-erythritol 4-phosphate + NADP(+) = 1-deoxy-D-xylulose 5-phosphate + NADPH + H(+). It participates in isoprenoid biosynthesis; isopentenyl diphosphate biosynthesis via DXP pathway; isopentenyl diphosphate from 1-deoxy-D-xylulose 5-phosphate: step 1/6. Inhibited by fosmidomycin and its derivatives. In terms of biological role, catalyzes the NADPH-dependent rearrangement and reduction of 1-deoxy-D-xylulose-5-phosphate (DXP) to 2-C-methyl-D-erythritol 4-phosphate (MEP). This is 1-deoxy-D-xylulose 5-phosphate reductoisomerase, apicoplastic (DXR) from Plasmodium falciparum (isolate 3D7).